The following is a 556-amino-acid chain: 2-succinyl-5-enolpyruvyl-6-hydroxy-3-cyclohexene-1-carboxylate synthase (556 aa).

This sequence belongs to the TPP enzyme family. MenD subfamily. As to quaternary structure, homodimer. It depends on Mg(2+) as a cofactor. Mn(2+) serves as cofactor. Requires thiamine diphosphate as cofactor.

The catalysed reaction is isochorismate + 2-oxoglutarate + H(+) = 5-enolpyruvoyl-6-hydroxy-2-succinyl-cyclohex-3-ene-1-carboxylate + CO2. It participates in quinol/quinone metabolism; 1,4-dihydroxy-2-naphthoate biosynthesis; 1,4-dihydroxy-2-naphthoate from chorismate: step 2/7. It functions in the pathway quinol/quinone metabolism; menaquinone biosynthesis. Its function is as follows. Catalyzes the thiamine diphosphate-dependent decarboxylation of 2-oxoglutarate and the subsequent addition of the resulting succinic semialdehyde-thiamine pyrophosphate anion to isochorismate to yield 2-succinyl-5-enolpyruvyl-6-hydroxy-3-cyclohexene-1-carboxylate (SEPHCHC). This Shigella boydii serotype 4 (strain Sb227) protein is 2-succinyl-5-enolpyruvyl-6-hydroxy-3-cyclohexene-1-carboxylate synthase.